Reading from the N-terminus, the 78-residue chain is Short neurotoxin SNTX11 (78 aa).

The first 21 residues, 1 to 21 (MKTLLLTFLVVTIVCLDLGYT), serve as a signal peptide directing secretion. Disulfide bonds link Cys24/Cys40, Cys33/Cys58, Cys62/Cys70, and Cys71/Cys76.

It belongs to the three-finger toxin family. Short-chain subfamily. In terms of tissue distribution, expressed by the venom gland.

Its subcellular location is the secreted. Functionally, this three-finger toxin binds and inhibits the nicotinic acetylcholine receptor (nAChR). This chain is Short neurotoxin SNTX11, found in Ophiophagus hannah (King cobra).